Consider the following 225-residue polypeptide: Urease accessory protein UreE (225 aa).

Composition is skewed to basic and acidic residues over residues 189-202 (HSHDFMGHSHEHEG) and 212-225 (NSHDNEHDEHHSRR). Residues 189–225 (HSHDFMGHSHEHEGHRHVHNHAGNSHDNEHDEHHSRR) form a disordered region.

The protein belongs to the UreE family.

It is found in the cytoplasm. Involved in urease metallocenter assembly. Binds nickel. Probably functions as a nickel donor during metallocenter assembly. In Edwardsiella ictaluri, this protein is Urease accessory protein UreE.